Consider the following 1748-residue polypeptide: RANBP2-like and GRIP domain-containing protein 1 (1748 aa).

Thr-14 is modified (phosphothreonine). 3 TPR repeats span residues 51–84, 575–608, and 639–672; these read PRAH…NPPQ, QKMG…LKII, and EDAH…VSYW. The interval 751–796 is disordered; sequence GPLYKNGSLRNADSEIKHSTPSPTKYSLSPSKSYKYSPKTPPRWAE. A compositionally biased stretch (low complexity) spans 769-788; that stretch reads STPSPTKYSLSPSKSYKYSP. The 137-residue stretch at 1021–1157 folds into the RanBD1 1 domain; that stretch reads HFEPVVQMPE…FEECQRLLLD (137 aa). 2 disordered regions span residues 1198 to 1233 and 1291 to 1316; these read TKVT…TLEW and AKLN…ERDG. Residues 1220–1229 show a composition bias toward polar residues; that stretch reads IKPNPENTGP. Over residues 1302-1314 the composition is skewed to acidic residues; that stretch reads TDEESDVTQEEER. Residues 1318-1454 enclose the RanBD1 2 domain; the sequence is YFEPVVPLPD…FDEAKTAQEK (137 aa). Over residues 1565-1578 the composition is skewed to polar residues; that stretch reads NDSETSSVAQSGSE. The interval 1565 to 1606 is disordered; sequence NDSETSSVAQSGSESKVEPKKCELSKNSDIEQSSDSKVKNLS. A compositionally biased stretch (basic and acidic residues) spans 1579-1602; the sequence is SKVEPKKCELSKNSDIEQSSDSKV. Residues 1685 to 1735 enclose the GRIP domain; it reads QEESAANVEHLKNVLLQFIFLKPGSERESLLPVINTMLQLSPEEKGKLAAV.

The protein is RANBP2-like and GRIP domain-containing protein 1 (RGPD1) of Homo sapiens (Human).